The chain runs to 963 residues: Protein suppressor of white apricot (963 aa).

One copy of the SURP motif 1 repeat lies at 234–276 (IIEKTARFIATQGAQMEILIKAKQANNTQFDFLTQGGHLQPYY). Disordered stretches follow at residues 290–322 (PAPQ…RRNP) and 360–430 (EDES…EPPQ). A compositionally biased stretch (basic and acidic residues) spans 300–317 (NTDKEAPSADDHSEEVAG). Positions 364–375 (SNPGNSQHSGGT) are enriched in polar residues. Basic and acidic residues predominate over residues 407–418 (THEEESSNREQQ). Residues Ser-438, Ser-447, Ser-448, and Ser-450 each carry the phosphoserine modification. The segment at 445–470 (NYSSESEEEEDQVQPEKEEEKKPEPV) is disordered. Over residues 458–468 (QPEKEEEKKPE) the composition is skewed to basic and acidic residues. The SURP motif 2 repeat unit spans residues 483-523 (IIDKTATYVIKNGRQFEETLRTKSVDRFSFLLPANEYYPYY). Disordered stretches follow at residues 593-613 (PQEA…HVRP), 634-662 (TAGQ…ERVK), and 716-963 (PPES…SSSP). Polar residues predominate over residues 637–651 (QKGNITASPSCSSPQ). Ser-649 carries the post-translational modification Phosphoserine. A compositionally biased stretch (basic and acidic residues) spans 652 to 662 (KEQRQAEERVK). Over residues 718–727 (ESAAGAATAD) the composition is skewed to low complexity. Residues 768 to 778 (DEEDDDEEDGG) show a composition bias toward acidic residues. The segment covering 787-796 (NDDSTNTFTS) has biased composition (polar residues). Positions 799-809 (VLPPTAAPPPA) are enriched in pro residues. Over residues 820-830 (QLVATTSTRSS) the composition is skewed to low complexity. Residues 831-847 (SSRHLKTHRRSRSRSKN) show a composition bias toward basic residues. Over residues 848 to 858 (VRSSDSSPSSR) the composition is skewed to low complexity. 2 stretches are compositionally biased toward basic residues: residues 861–870 (SRRRRQKSSR) and 882–913 (KSQH…RRSR). Ser-912, Ser-914, and Ser-916 each carry phosphoserine. The segment covering 934-944 (AEQRRQQDRRR) has biased composition (basic and acidic residues). A compositionally biased stretch (basic residues) spans 945 to 963 (TPTKKSHKRHKRRRRSSSP).

It is found in the nucleus speckle. Its function is as follows. Regulator of pre-mRNA splicing (and, possibly, of other RNA processing events). Regulates its own expression at the level of RNA processing. This is Protein suppressor of white apricot (su(w[a])) from Drosophila melanogaster (Fruit fly).